The following is a 178-amino-acid chain: Dual-action ribosomal maturation protein DarP (178 aa).

Belongs to the DarP family.

It localises to the cytoplasm. In terms of biological role, member of a network of 50S ribosomal subunit biogenesis factors which assembles along the 30S-50S interface, preventing incorrect 23S rRNA structures from forming. Promotes peptidyl transferase center (PTC) maturation. In Haemophilus influenzae (strain PittEE), this protein is Dual-action ribosomal maturation protein DarP.